A 142-amino-acid polypeptide reads, in one-letter code: Large ribosomal subunit protein uL13 (142 aa).

This sequence belongs to the universal ribosomal protein uL13 family. In terms of assembly, part of the 50S ribosomal subunit.

In terms of biological role, this protein is one of the early assembly proteins of the 50S ribosomal subunit, although it is not seen to bind rRNA by itself. It is important during the early stages of 50S assembly. The chain is Large ribosomal subunit protein uL13 from Sodalis glossinidius (strain morsitans).